We begin with the raw amino-acid sequence, 40 residues long: Dolichyl-diphosphooligosaccharide--protein glycosyltransferase subunit 4 (40 aa).

Residues 1 to 7 (MITDMQL) are Lumenal-facing. A helical membrane pass occupies residues 8-28 (AIFSNVLGVFLFLLVVAYHYI). The Cytoplasmic segment spans residues 29 to 40 (NANTGKPSAKAK).

The protein belongs to the OST4 family. As to quaternary structure, component of the oligosaccharyltransferase (OST) complex.

The protein localises to the endoplasmic reticulum membrane. Functionally, subunit of the oligosaccharyl transferase (OST) complex that catalyzes the initial transfer of a defined glycan (Glc(3)Man(9)GlcNAc(2) in eukaryotes) from the lipid carrier dolichol-pyrophosphate to an asparagine residue within an Asn-X-Ser/Thr consensus motif in nascent polypeptide chains, the first step in protein N-glycosylation. N-glycosylation occurs cotranslationally and the complex associates with the Sec61 complex at the channel-forming translocon complex that mediates protein translocation across the endoplasmic reticulum (ER). All subunits are required for a maximal enzyme activity. In Drosophila sechellia (Fruit fly), this protein is Dolichyl-diphosphooligosaccharide--protein glycosyltransferase subunit 4.